Consider the following 101-residue polypeptide: Small ribosomal subunit protein uS14 (101 aa).

Belongs to the universal ribosomal protein uS14 family. In terms of assembly, part of the 30S ribosomal subunit. Contacts proteins S3 and S10.

Functionally, binds 16S rRNA, required for the assembly of 30S particles and may also be responsible for determining the conformation of the 16S rRNA at the A site. This chain is Small ribosomal subunit protein uS14, found in Polaromonas sp. (strain JS666 / ATCC BAA-500).